Here is a 1369-residue protein sequence, read N- to C-terminus: DNA-directed RNA polymerase subunit beta (1369 aa).

Belongs to the RNA polymerase beta chain family. The RNAP catalytic core consists of 2 alpha, 1 beta, 1 beta' and 1 omega subunit. When a sigma factor is associated with the core the holoenzyme is formed, which can initiate transcription.

The catalysed reaction is RNA(n) + a ribonucleoside 5'-triphosphate = RNA(n+1) + diphosphate. Functionally, DNA-dependent RNA polymerase catalyzes the transcription of DNA into RNA using the four ribonucleoside triphosphates as substrates. This Solidesulfovibrio magneticus (strain ATCC 700980 / DSM 13731 / RS-1) (Desulfovibrio magneticus) protein is DNA-directed RNA polymerase subunit beta.